The primary structure comprises 780 residues: Aconitate hydratase, mitochondrial (780 aa).

The N-terminal 27 residues, 1-27 (MAPYSLLVTRLQKALGVRQYHVASVLC), are a transit peptide targeting the mitochondrion. An N6-succinyllysine modification is found at lysine 31. Lysine 50 carries the N6-acetyllysine; alternate modification. Lysine 50 is subject to N6-succinyllysine; alternate. Substrate is bound at residue glutamine 99. N6-acetyllysine; alternate is present on residues lysine 138 and lysine 144. Lysine 138 and lysine 144 each carry N6-succinyllysine; alternate. Position 192–194 (192–194 (DSH)) interacts with substrate. Lysine 233 bears the N6-acetyllysine; alternate mark. Position 233 is an N6-succinyllysine; alternate (lysine 233). Cysteine 385 provides a ligand contact to [4Fe-4S] cluster. N6-succinyllysine is present on lysine 411. Residues cysteine 448 and cysteine 451 each contribute to the [4Fe-4S] cluster site. Substrate contacts are provided by arginine 474 and arginine 479. Residues 528 to 537 (DADELPKGEF) show a composition bias toward basic and acidic residues. Positions 528-560 (DADELPKGEFDPGQDTYQHPPKDSSGQHVDVSP) are disordered. Position 549 is an N6-succinyllysine (lysine 549). Polar residues predominate over residues 551–560 (SSGQHVDVSP). Serine 559 is modified (phosphoserine). Position 573 is an N6-acetyllysine; alternate (lysine 573). At lysine 573 the chain carries N6-succinyllysine; alternate. Residues lysine 577 and lysine 591 each carry the N6-succinyllysine modification. Lysine 605 bears the N6-acetyllysine; alternate mark. Lysine 605 is modified (N6-succinyllysine; alternate). Arginine 607 contacts substrate. N6-succinyllysine is present on lysine 628. Serine 670 carries the phosphoserine modification. 670–671 (SR) provides a ligand contact to substrate. Lysine 689 carries the N6-succinyllysine modification. An N6-acetyllysine; alternate mark is found at lysine 723 and lysine 730. Lysine 723 and lysine 730 each carry N6-succinyllysine; alternate. N6-acetyllysine occurs at positions 736, 739, and 743.

The protein belongs to the aconitase/IPM isomerase family. As to quaternary structure, monomer. It depends on [4Fe-4S] cluster as a cofactor. Post-translationally, forms covalent cross-links mediated by transglutaminase TGM2, between a glutamine and the epsilon-amino group of a lysine residue, forming homopolymers and heteropolymers.

It localises to the mitochondrion. The catalysed reaction is citrate = D-threo-isocitrate. It functions in the pathway carbohydrate metabolism; tricarboxylic acid cycle; isocitrate from oxaloacetate: step 2/2. Catalyzes the isomerization of citrate to isocitrate via cis-aconitate. This Homo sapiens (Human) protein is Aconitate hydratase, mitochondrial (ACO2).